The primary structure comprises 348 residues: UPF0283 membrane protein HAPS_0079 (348 aa).

3 helical membrane passes run 57 to 77 (FLAA…QWLI), 86 to 106 (IYFA…GAII), and 203 to 223 (ENAI…MVAW).

This sequence belongs to the UPF0283 family.

It localises to the cell inner membrane. This is UPF0283 membrane protein HAPS_0079 from Glaesserella parasuis serovar 5 (strain SH0165) (Haemophilus parasuis).